A 635-amino-acid polypeptide reads, in one-letter code: Sodium- and chloride-dependent creatine transporter 1 (635 aa).

The interval 1 to 35 (MAKKSAENGIYSVSGDEKKGPLIAPGPDGAPAKGD) is disordered. At 1 to 60 (MAKKSAENGIYSVSGDEKKGPLIAPGPDGAPAKGDGPAGLGAPGGCLAVPPRETWTRQMD) the chain is on the cytoplasmic side. Residues 25–35 (PGPDGAPAKGD) are compositionally biased toward low complexity. A helical transmembrane segment spans residues 61–81 (FIMSCVGFAVGLGNVWRFPYL). Residues 82–87 (CYKNGG) are Extracellular-facing. A helical membrane pass occupies residues 88-108 (GVFLIPYVLIALVGGIPIFFL). At 109–138 (EISLGQFMKAGSINVWNICPLFKGLGYASM) the chain is on the cytoplasmic side. The helical transmembrane segment at 139 to 159 (VIVFYCNTYYIMVLAWGFYYL) threads the bilayer. Residues 160-230 (VKSFTTTLPW…LSGGLEVPGA (71 aa)) lie on the Extracellular side of the membrane. Asn192 and Asn197 each carry an N-linked (GlcNAc...) asparagine glycan. Residues 231–251 (LNSEVTLCLLACWVLVYFCVW) traverse the membrane as a helical segment. At 252–269 (KGVKSTGKIVYFTATFPY) the chain is on the cytoplasmic side. Residues 270–290 (VVLVVLLVRGVLLPGALDGII) traverse the membrane as a helical segment. Residues 291-304 (YYLKPDWSKLRSPQ) are Extracellular-facing. The chain crosses the membrane as a helical span at residues 305 to 325 (VWIDAGTQIFFSYAIGLGALT). At 326–341 (ALGSYNRFNNNCYKDA) the chain is on the cytoplasmic side. Residues 342 to 362 (IILALINSGTSFFAGFVVFSI) form a helical membrane-spanning segment. The Extracellular portion of the chain corresponds to 363 to 394 (LGFMATEQGVHISKVAESGPGLAFIAYPRAVT). Residues 395-415 (LMPVAPLWAALFFFMLLLLGL) traverse the membrane as a helical segment. Residues 416–444 (DSQFVGVEGFITGLLDLLPASYYFRFQRE) lie on the Cytoplasmic side of the membrane. A helical membrane pass occupies residues 445–465 (ISVALCCALCFVIDLSMVQMA). Over 466 to 479 (GMYVFQLFDYYSAS) the chain is Extracellular. A helical membrane pass occupies residues 480–500 (GTTLLWQAFWECVAVAWVYGA). At 501–520 (DRFMDDIACMIGYRPCPWMK) the chain is on the cytoplasmic side. The helical transmembrane segment at 521–541 (WCWSFFTPLVCMGIFIFNIVY) threads the bilayer. Over 542-560 (YKPLVYNKTYVYPWWGEAM) the chain is Extracellular. N-linked (GlcNAc...) asparagine glycosylation occurs at Asn548. A helical transmembrane segment spans residues 561–581 (GWAFALSSMLCVPLHLLGCLL). Over 582 to 635 (RAKGTMAERWQHLTQPVWGLHHLEYRAQDADVRGLTTLTPVSESSKVVVVESVM) the chain is Cytoplasmic. Phosphothreonine is present on residues Thr617 and Thr620. Ser623 carries the post-translational modification Phosphoserine.

The protein belongs to the sodium:neurotransmitter symporter (SNF) (TC 2.A.22) family. SLC6A8 subfamily. Glycosylated. In terms of tissue distribution, prominent in kidney, heart, and muscle, also present in brain, but not in liver and intestine.

It localises to the cell membrane. Its subcellular location is the apical cell membrane. It carries out the reaction creatine(out) + chloride(out) + 2 Na(+)(out) = creatine(in) + chloride(in) + 2 Na(+)(in). Functionally, creatine:sodium symporter which mediates the uptake of creatine. Plays an important role in supplying creatine to the brain via the blood-brain barrier. The polypeptide is Sodium- and chloride-dependent creatine transporter 1 (SLC6A8) (Oryctolagus cuniculus (Rabbit)).